The primary structure comprises 689 residues: uncharacterized protein (689 aa).

Disordered regions lie at residues 121–206, 286–305, 322–414, and 552–611; these read LALK…VDPS, ASSNQSAAHPDGNNALPMDN, NSYS…SMAH, and AAMP…HLSD. Residues 133–158 show a composition bias toward low complexity; the sequence is SPNNSIPLMANSCLLSADNSSSSTTS. Residues 322–380 show a composition bias toward polar residues; the sequence is NSYSYDRYTPNQPSYLESKPGNHQPSYTSEQPMYSTASVPQQISNGPTAVNGLPMNSYT. Composition is skewed to low complexity over residues 381–411 and 560–572; these read PHSNHLHSPSPNSNSGPTDSLSAPNSTSSPS and PSAHDSASAPSPH.

Its subcellular location is the cytoplasm. This is an uncharacterized protein from Schizosaccharomyces pombe (strain 972 / ATCC 24843) (Fission yeast).